A 418-amino-acid chain; its full sequence is Gamma-glutamyl phosphate reductase (418 aa).

Belongs to the gamma-glutamyl phosphate reductase family.

It localises to the cytoplasm. The catalysed reaction is L-glutamate 5-semialdehyde + phosphate + NADP(+) = L-glutamyl 5-phosphate + NADPH + H(+). Its pathway is amino-acid biosynthesis; L-proline biosynthesis; L-glutamate 5-semialdehyde from L-glutamate: step 2/2. Its function is as follows. Catalyzes the NADPH-dependent reduction of L-glutamate 5-phosphate into L-glutamate 5-semialdehyde and phosphate. The product spontaneously undergoes cyclization to form 1-pyrroline-5-carboxylate. This is Gamma-glutamyl phosphate reductase from Lacticaseibacillus paracasei (strain ATCC 334 / BCRC 17002 / CCUG 31169 / CIP 107868 / KCTC 3260 / NRRL B-441) (Lactobacillus paracasei).